Here is an 80-residue protein sequence, read N- to C-terminus: UPF0180 protein GK1051 (80 aa).

The protein belongs to the UPF0180 family.

The chain is UPF0180 protein GK1051 from Geobacillus kaustophilus (strain HTA426).